The chain runs to 129 residues: MKNNLREEKEVVFDGCMNVLSLPSGWKAITPKKNNATSEIIVLFIPPKASYHIILKYNKTKHCELFFSDHITGEQDIIYSQNAFFSHVINHTIALVDVLNKKSYASNVIKFLITMEGGGDILSESKRAP.

In terms of biological role, positive regulatory protein of bfpA, the gene coding for the bundle-forming pilus of EPEC. This is Protein PerB (perB) from Escherichia coli O111:H-.